The sequence spans 297 residues: Protein-methionine-sulfoxide reductase catalytic subunit MsrP (297 aa).

Positions methionine 1 to alanine 35 form a signal peptide, tat-type signal. Mo-molybdopterin contacts are provided by residues tyrosine 62–glutamate 63, cysteine 116, threonine 151, asparagine 201, arginine 206, and serine 217–lysine 219.

The protein belongs to the MsrP family. As to quaternary structure, heterodimer of a catalytic subunit (MsrP) and a heme-binding subunit (MsrQ). The cofactor is Mo-molybdopterin. In terms of processing, predicted to be exported by the Tat system. The position of the signal peptide cleavage has not been experimentally proven.

It is found in the periplasm. It catalyses the reaction L-methionyl-[protein] + a quinone + H2O = L-methionyl-(S)-S-oxide-[protein] + a quinol. The catalysed reaction is L-methionyl-[protein] + a quinone + H2O = L-methionyl-(R)-S-oxide-[protein] + a quinol. Its function is as follows. Part of the MsrPQ system that repairs oxidized periplasmic proteins containing methionine sulfoxide residues (Met-O), using respiratory chain electrons. Thus protects these proteins from oxidative-stress damage caused by reactive species of oxygen and chlorine generated by the host defense mechanisms. MsrPQ is essential for the maintenance of envelope integrity under bleach stress, rescuing a wide series of structurally unrelated periplasmic proteins from methionine oxidation. The catalytic subunit MsrP is non-stereospecific, being able to reduce both (R-) and (S-) diastereoisomers of methionine sulfoxide. This Campylobacter jejuni subsp. jejuni serotype O:2 (strain ATCC 700819 / NCTC 11168) protein is Protein-methionine-sulfoxide reductase catalytic subunit MsrP.